We begin with the raw amino-acid sequence, 69 residues long: MNTKFILILLVLIISTIFVNSQSLNVEVNDNTKDVQDWHDACKVITDEPMCLAFIQHCEWTKGHCKAWL.

Residues 1–21 form the signal peptide; that stretch reads MNTKFILILLVLIISTIFVNS.

It is found in the secreted. This is an uncharacterized protein from Dictyostelium discoideum (Social amoeba).